Reading from the N-terminus, the 203-residue chain is Alpha-amylase/subtilisin inhibitor (203 aa).

A compositionally biased stretch (polar residues) spans 1 to 12 (MGSRRAGSSSSP). The first 22 residues, 1–22 (MGSRRAGSSSSPLFWPAPPSRA), serve as a signal peptide directing secretion. Residues 1 to 34 (MGSRRAGSSSSPLFWPAPPSRAADPPPVHDTDGH) form a disordered region. Residues 15-26 (WPAPPSRAADPP) show a composition bias toward pro residues. 2 disulfides stabilise this stretch: Cys65–Cys112 and Cys166–Cys170.

Belongs to the protease inhibitor I3 (leguminous Kunitz-type inhibitor) family.

Its function is as follows. This protein inhibits independently subtilisin and alpha-amylase. The sequence is that of Alpha-amylase/subtilisin inhibitor from Hordeum vulgare (Barley).